A 355-amino-acid polypeptide reads, in one-letter code: Green-sensitive opsin-1 (355 aa).

At 1–49 the chain is on the extracellular side; that stretch reads MAAHADEPVFAARRYNEETTRESAFVYTNANNTRDPFEGPNYHIAPRWV. The N-linked (GlcNAc...) asparagine glycan is linked to asparagine 31. The chain crosses the membrane as a helical span at residues 50–74; it reads YNLASLWMIIVVIASIFTNSLVIVA. Topologically, residues 75–86 are cytoplasmic; sequence TAKFKKLRHPLN. The helical transmembrane segment at 87 to 112 threads the bilayer; the sequence is WILVNLAIADLGETVLASTISVFNQV. Residues 113 to 126 lie on the Extracellular side of the membrane; it reads FGYFVLGHPMCIFE. A disulfide bridge connects residues cysteine 123 and cysteine 200. A helical membrane pass occupies residues 127–146; it reads GWTVSVCGITALWSLTIISW. Over 147–165 the chain is Cytoplasmic; the sequence is ERWVVVCKPFGNVKFDGKW. A helical transmembrane segment spans residues 166 to 189; that stretch reads AAGGIIFAWTWAIIWCTPPIFGWS. Residues 190–215 are Extracellular-facing; it reads RYWPHGLKTSCGPDVFSGSEDPGVAS. Residues 216–243 form a helical membrane-spanning segment; the sequence is YMVTLLLTCCILPLSVIIICYIFVWNAI. The Cytoplasmic segment spans residues 244 to 265; that stretch reads HQVAQQQKDSESTQKAEKEVSR. The helical transmembrane segment at 266-289 threads the bilayer; sequence MVVVMILAFILCWGPYASFATFSA. The Extracellular segment spans residues 290–297; sequence LNPGYAWH. The chain crosses the membrane as a helical span at residues 298–322; that stretch reads PLAAALPAYFAKSATIYNPIIYVFM. Position 309 is an N6-(retinylidene)lysine (lysine 309). Topologically, residues 323-355 are cytoplasmic; that stretch reads NRQFRSCIMQLFGKKVEDASEVSGSTTEVSTAS.

This sequence belongs to the G-protein coupled receptor 1 family. Opsin subfamily. As to expression, the color pigments are found in the cone photoreceptor cells.

The protein resides in the membrane. Functionally, visual pigments are the light-absorbing molecules that mediate vision. They consist of an apoprotein, opsin, covalently linked to cis-retinal. This is Green-sensitive opsin-1 (G103) from Psalidodon fasciatus (Banded astyanax).